The primary structure comprises 193 residues: 3-isopropylmalate dehydratase small subunit (193 aa).

The protein belongs to the LeuD family. LeuD type 1 subfamily. In terms of assembly, heterodimer of LeuC and LeuD.

The enzyme catalyses (2R,3S)-3-isopropylmalate = (2S)-2-isopropylmalate. It participates in amino-acid biosynthesis; L-leucine biosynthesis; L-leucine from 3-methyl-2-oxobutanoate: step 2/4. In terms of biological role, catalyzes the isomerization between 2-isopropylmalate and 3-isopropylmalate, via the formation of 2-isopropylmaleate. The polypeptide is 3-isopropylmalate dehydratase small subunit (Bacillus cereus (strain AH820)).